A 196-amino-acid polypeptide reads, in one-letter code: Holliday junction branch migration complex subunit RuvA (196 aa).

The interval 1–62 (MYEYINGLIT…ENEMTLYGFI (62 aa)) is domain I. The interval 63 to 141 (DENEKYLFNK…DLALSAGMTV (79 aa)) is domain II. Residues 142-146 (ETVPT) are flexible linker. Residues 147–196 (TDNQALADALAALESLGYSAKDVAKLQTVLANQKDTTDGYIRSALKFLVK) form a domain III region.

The protein belongs to the RuvA family. As to quaternary structure, homotetramer. Forms an RuvA(8)-RuvB(12)-Holliday junction (HJ) complex. HJ DNA is sandwiched between 2 RuvA tetramers; dsDNA enters through RuvA and exits via RuvB. An RuvB hexamer assembles on each DNA strand where it exits the tetramer. Each RuvB hexamer is contacted by two RuvA subunits (via domain III) on 2 adjacent RuvB subunits; this complex drives branch migration. In the full resolvosome a probable DNA-RuvA(4)-RuvB(12)-RuvC(2) complex forms which resolves the HJ.

Its subcellular location is the cytoplasm. Functionally, the RuvA-RuvB-RuvC complex processes Holliday junction (HJ) DNA during genetic recombination and DNA repair, while the RuvA-RuvB complex plays an important role in the rescue of blocked DNA replication forks via replication fork reversal (RFR). RuvA specifically binds to HJ cruciform DNA, conferring on it an open structure. The RuvB hexamer acts as an ATP-dependent pump, pulling dsDNA into and through the RuvAB complex. HJ branch migration allows RuvC to scan DNA until it finds its consensus sequence, where it cleaves and resolves the cruciform DNA. This chain is Holliday junction branch migration complex subunit RuvA, found in Leuconostoc citreum (strain KM20).